Reading from the N-terminus, the 123-residue chain is NADH-quinone oxidoreductase subunit A (123 aa).

3 helical membrane-spanning segments follow: residues 11–31, 67–87, and 92–112; these read FPVL…VSIG, LVAI…PWGV, and IGWP…LGFA.

It belongs to the complex I subunit 3 family. NDH-1 is composed of 14 different subunits. Subunits NuoA, H, J, K, L, M, N constitute the membrane sector of the complex.

It is found in the cell inner membrane. It catalyses the reaction a quinone + NADH + 5 H(+)(in) = a quinol + NAD(+) + 4 H(+)(out). Its function is as follows. NDH-1 shuttles electrons from NADH, via FMN and iron-sulfur (Fe-S) centers, to quinones in the respiratory chain. The immediate electron acceptor for the enzyme in this species is believed to be ubiquinone. Couples the redox reaction to proton translocation (for every two electrons transferred, four hydrogen ions are translocated across the cytoplasmic membrane), and thus conserves the redox energy in a proton gradient. The sequence is that of NADH-quinone oxidoreductase subunit A from Paraburkholderia phymatum (strain DSM 17167 / CIP 108236 / LMG 21445 / STM815) (Burkholderia phymatum).